Consider the following 864-residue polypeptide: Dynamin-1 (864 aa).

The Dynamin-type G domain maps to 28 to 294 (DLDLPQIAVV…LTNHIRDTLP (267 aa)). The interval 38–45 (GGQSAGKS) is G1 motif. 7 residues coordinate GDP: Ser-41, Gly-43, Lys-44, Ser-45, Ser-46, Arg-59, and Gly-60. The G2 motif stretch occupies residues 64–66 (VTR). Tyr-80 is subject to Phosphotyrosine. A 3'-nitrotyrosine; alternate modification is found at Tyr-125. Position 125 is a phosphotyrosine; alternate (Tyr-125). The tract at residues 136–139 (DLPG) is G3 motif. Residues 205 to 208 (TKLD) are G4 motif. Residues Lys-206, Asp-208, Asp-211, Asn-236, Arg-237, and Gln-239 each coordinate GDP. Positions 235 to 238 (VNRS) are G5 motif. Phosphoserine is present on residues Ser-306 and Ser-347. Tyr-354 is subject to Phosphotyrosine. Ser-512 is modified (phosphoserine). Positions 519-625 (LVIRKGWLTI…WKASFLRAGV (107 aa)) constitute a PH domain. One can recognise a GED domain in the interval 659–750 (VETIRNLVDS…IIGDINTTTV (92 aa)). The tract at residues 767–864 (SVPAGRRSPT…PESPRPPFDL (98 aa)) is disordered. Residue Ser-774 is modified to Phosphoserine; by GSK3-beta. Ser-778 carries the phosphoserine modification. Arg-796 bears the Omega-N-methylarginine mark. At Ser-822 the chain carries Phosphoserine. The span at 825 to 843 (PFGPPPQVPSRPNRAPPGV) shows a compositional bias: pro residues. Ser-851 and Ser-857 each carry phosphoserine.

This sequence belongs to the TRAFAC class dynamin-like GTPase superfamily. Dynamin/Fzo/YdjA family. Homodimer; homodimerization is mediated by the dynamin-type G domain which promotes assembly-stimulated GTPase activity. Homo-tetramer formed from two dimers in the absence of lipid. Oligomerizes into a helical polymer that self-assembles around the vesicle membrane, when associated to the menbrane through lipid binding. Interacts (via C-terminal proline-rich domain (PRD)) with SNX9 (via SH3 domain); this interaction allows regulation of DNM1 self-assembly during late stages of endocytic vesicle formation and supports DNM1's early functions in accelerating clathrin-coated pits (CCPs) maturation in non neuronals cell. Interacts (via C-terminal proline-rich domain (PRD)) with MYO1E (via SH3 domain); this interaction regulates receptor-mediated endocytosis. Interacts with SNX33 (via SH3 domain); this interaction decreases DNM1-dependent endocytosis. Interacts with DIAPH1. Interacts with GRB2 (via SH3 domain); this interaction mediates disassembly of DNM1 polymers, therefore modulates self-assembly. Forms a complex with BIN1 (via SH3 domain) and SH3GL2 (via SH3 domain). Forms a complex with SH3GL2 (via SH3 domain) and AMPH (via SH3 domain). Forms a complex with SH3GL2 (via SH3 domain) and SYNJ1. Interacts with AMPH. Interacts (via C-terminal proline-rich domain (PRD)) with SYT1; this interaction facilitates vesicle fission during clathrin-mediated endocytosis (CME). Interacts (via C-terminal proline-rich domain (PRD)) with PLCG1 (via SH3 domain); this interaction stimulates the release of GDP from DNM1 and enhances DNM1-dependent endocytosis. Interacts with SNPH; this interaction inhibits the binding of DNM1 to AMPH and DNM1-receptor-mediated endocytosis. Interacts with CAV1. Interacts with SH3GLB1 (via SH3 domain). Interacts with PACSIN1 (via SH3 domain), PACSIN2 (via SH3 domain) and PACSIN3 (via SH3 domain). Interacts with UNC119; this interaction decreases DNM1's GTPase activity and affects DNM1's interaction with AMPH. Interacts (GTP-bound form) with DNAJC6; this interaction allows clathrin-coated vesicle (CCV) formation at the plasma membrane. Post-translationally, phosphorylation at Ser-774 by GSK3B/GSK3-beta leads to inactivation of receptor-mediated endocytosis in non-neuronal cells. Dephosphorylation at Ser-774, through the EGFR downstream signaling, leads to activation and regulates early stages of clathrin-mediated endocytosis (CME). Phosphorylated by CDK5 leading to synaptic vesicle endocytosis (SVE) activation.

It localises to the cell membrane. It is found in the membrane. The protein localises to the clathrin-coated pit. The protein resides in the cytoplasmic vesicle. Its subcellular location is the presynapse. It localises to the secretory vesicle. It is found in the chromaffin granule. It catalyses the reaction GTP + H2O = GDP + phosphate + H(+). With respect to regulation, GTPase activity is activated by 1-phosphatidyl-1D-myo-inositol 4,5-bisphosphate. GTPase activity is inhibited by the heterodimer G protein formed by GNB1 and GNG2 with an IC(50)=400 nM when DNM1 concentration is 5 nM. Catalyzes the hydrolysis of GTP and utilizes this energy to mediate vesicle scission and participates in many forms of endocytosis, such as clathrin-mediated endocytosis or synaptic vesicle endocytosis as well as rapid endocytosis (RE). Associates to the membrane, through lipid binding, and self-assembles into rings and stacks of interconnected rings through oligomerization to form a helical polymer around the vesicle membrane leading to constriction of invaginated coated pits around their necks. Self-assembly of the helical polymer induces membrane tubules narrowing until the polymer reaches a length sufficient to trigger GTP hydrolysis. Depending on the curvature imposed on the tubules, membrane detachment from the helical polymer upon GTP hydrolysis can cause spontaneous hemifission followed by complete fission. May play a role in regulating early stages of clathrin-mediated endocytosis in non-neuronal cells through its activation by dephosphorylation via the signaling downstream of EGFR. Controls vesicle size at a step before fission, during formation of membrane pits, at hippocampal synapses. Controls plastic adaptation of the synaptic vesicle recycling machinery to high levels of activity. Mediates rapid endocytosis (RE), a Ca(2+)-dependent and clathrin- and K(+)-independent process in chromaffin cells. Microtubule-associated force-producing protein involved in producing microtubule bundles and able to bind and hydrolyze GTP. Through its interaction with DNAJC6, acts during the early steps of clathrin-coated vesicle (CCV) formation. This is Dynamin-1 from Homo sapiens (Human).